The following is a 73-amino-acid chain: Potassium channel toxin alpha-KTx 27.4 (73 aa).

A signal peptide spans 1-26; the sequence is MKFLFLTLVLLYFTAILVFIVFPSYA.

It belongs to the short scorpion toxin superfamily. Potassium channel inhibitor family. Alpha-KTx 27 subfamily. Contains 4 disulfide bonds. Expressed by the venom gland.

The protein localises to the secreted. This chain is Potassium channel toxin alpha-KTx 27.4, found in Mesobuthus gibbosus (Mediterranean checkered scorpion).